The sequence spans 29 residues: Trypsin inhibitor 1 (29 aa).

3 disulfide bridges follow: cysteine 3–cysteine 20, cysteine 10–cysteine 22, and cysteine 16–cysteine 28.

This sequence belongs to the protease inhibitor I7 (squash-type serine protease inhibitor) family.

It is found in the secreted. In terms of biological role, inhibits trypsin. This chain is Trypsin inhibitor 1, found in Luffa aegyptiaca (Sponge gourd).